Reading from the N-terminus, the 776-residue chain is Protocadherin beta-16 (776 aa).

The first 28 residues, 1-28 (MEIGWMHNRRQRQVLVFFVLLSLSGAGA), serve as a signal peptide directing secretion. The Extracellular portion of the chain corresponds to 29-690 (ELGSYSVVEE…TQANSLTVYL (662 aa)). Cadherin domains follow at residues 35–133 (VVEE…SPMF), 138–242 (MILK…APEF), 247–347 (YKVQ…PPQV), 352–451 (LTSP…APTF), and 456–561 (YTLF…SPFV). N-linked (GlcNAc...) asparagine glycans are attached at residues Asn-418 and Asn-436. Asn-567 carries N-linked (GlcNAc...) asparagine glycosylation. Residues 568–671 (GSAPCTELVP…LVDGFSQPFL (104 aa)) form the Cadherin 6 domain. Residues 691 to 711 (VVALASVSSLFLFSVLLFVAV) form a helical membrane-spanning segment. Topologically, residues 712–776 (RLCRRSRAAS…LKPIIPNFSP (65 aa)) are cytoplasmic.

It localises to the membrane. Its function is as follows. Potential calcium-dependent cell-adhesion protein. May be involved in the establishment and maintenance of specific neuronal connections in the brain. This Homo sapiens (Human) protein is Protocadherin beta-16.